The chain runs to 394 residues: NAD(P)H-quinone oxidoreductase subunit H (394 aa).

It belongs to the complex I 49 kDa subunit family. NDH-1 can be composed of about 15 different subunits; different subcomplexes with different compositions have been identified which probably have different functions.

It is found in the cellular thylakoid membrane. It carries out the reaction a plastoquinone + NADH + (n+1) H(+)(in) = a plastoquinol + NAD(+) + n H(+)(out). It catalyses the reaction a plastoquinone + NADPH + (n+1) H(+)(in) = a plastoquinol + NADP(+) + n H(+)(out). Functionally, NDH-1 shuttles electrons from an unknown electron donor, via FMN and iron-sulfur (Fe-S) centers, to quinones in the respiratory and/or the photosynthetic chain. The immediate electron acceptor for the enzyme in this species is believed to be plastoquinone. Couples the redox reaction to proton translocation, and thus conserves the redox energy in a proton gradient. Cyanobacterial NDH-1 also plays a role in inorganic carbon-concentration. The sequence is that of NAD(P)H-quinone oxidoreductase subunit H from Synechococcus sp. (strain CC9902).